The sequence spans 1140 residues: Eukaryotic translation initiation factor 3 subunit A (1140 aa).

One can recognise a PCI domain in the interval 319 to 501 (LQRMAAHVLL…NSIYFGTDLT (183 aa)). Composition is skewed to basic and acidic residues over residues 588–623 (QNNA…EERE) and 829–899 (AAEE…RGGD). Disordered stretches follow at residues 588–630 (QNNA…HQNE) and 829–1140 (AAEE…VKRR). Serine 908 carries the post-translational modification Phosphoserine. 4 stretches are compositionally biased toward basic and acidic residues: residues 920–976 (ERND…EPDS), 990–1051 (SRDD…EPQR), 1059–1086 (DAPR…RGDQ), and 1109–1130 (TREE…KAGD).

It belongs to the eIF-3 subunit A family. Component of the eukaryotic translation initiation factor 3 (eIF-3) complex. The eIF-3 complex interacts with pix.

Its subcellular location is the cytoplasm. RNA-binding component of the eukaryotic translation initiation factor 3 (eIF-3) complex, which is involved in protein synthesis of a specialized repertoire of mRNAs and, together with other initiation factors, stimulates binding of mRNA and methionyl-tRNAi to the 40S ribosome. The eIF-3 complex specifically targets and initiates translation of a subset of mRNAs involved in cell proliferation. The sequence is that of Eukaryotic translation initiation factor 3 subunit A from Drosophila melanogaster (Fruit fly).